Here is an 869-residue protein sequence, read N- to C-terminus: DNA mismatch repair protein MutS (869 aa).

Residue 602–609 (GPNMSGKS) participates in ATP binding.

This sequence belongs to the DNA mismatch repair MutS family.

Functionally, this protein is involved in the repair of mismatches in DNA. It is possible that it carries out the mismatch recognition step. This protein has a weak ATPase activity. The chain is DNA mismatch repair protein MutS from Bacillus licheniformis (strain ATCC 14580 / DSM 13 / JCM 2505 / CCUG 7422 / NBRC 12200 / NCIMB 9375 / NCTC 10341 / NRRL NRS-1264 / Gibson 46).